The following is a 715-amino-acid chain: 1,4-alpha-glucan branching enzyme GlgB (715 aa).

Aspartate 396 serves as the catalytic Nucleophile. The active-site Proton donor is the glutamate 449.

This sequence belongs to the glycosyl hydrolase 13 family. GlgB subfamily. Monomer.

It catalyses the reaction Transfers a segment of a (1-&gt;4)-alpha-D-glucan chain to a primary hydroxy group in a similar glucan chain.. Its pathway is glycan biosynthesis; glycogen biosynthesis. Catalyzes the formation of the alpha-1,6-glucosidic linkages in glycogen by scission of a 1,4-alpha-linked oligosaccharide from growing alpha-1,4-glucan chains and the subsequent attachment of the oligosaccharide to the alpha-1,6 position. The protein is 1,4-alpha-glucan branching enzyme GlgB of Aliivibrio fischeri (strain ATCC 700601 / ES114) (Vibrio fischeri).